Here is a 190-residue protein sequence, read N- to C-terminus: Imidazoleglycerol-phosphate dehydratase (190 aa).

Belongs to the imidazoleglycerol-phosphate dehydratase family.

The protein localises to the cytoplasm. It carries out the reaction D-erythro-1-(imidazol-4-yl)glycerol 3-phosphate = 3-(imidazol-4-yl)-2-oxopropyl phosphate + H2O. It functions in the pathway amino-acid biosynthesis; L-histidine biosynthesis; L-histidine from 5-phospho-alpha-D-ribose 1-diphosphate: step 6/9. The polypeptide is Imidazoleglycerol-phosphate dehydratase (Methanococcus maripaludis (strain C5 / ATCC BAA-1333)).